A 366-amino-acid chain; its full sequence is MAYDAKTDWLPDDPINEDDVNRWEKGIQDAHKDLAVHKNDMNNPHNTTKAQIGLGNVDNVQQASKKEFEEHRNDLQRHITPVERENWNAKETIVGAQEKADKALSDAKYYVDTNYKNNNLTLITGDNAIQDARTGGEEYPLGLTLMDIGQGNTTGYPLGYGIVKNEKYNNYRFTQYFYGTGNESGTYYDSTGVWIRHWWSGSGWTPWQKISGFAHANIGTTGVQYLKKIDHTKIAFNRVIKDSHNAFDTKNNRFIAPNDGMYLIGASIYTLNYTSYINFHLKVYLNGKAYKTLHHVRGDFQEKDNGMNLGLNGNATVPMNKGDYVEIWCYCNYGGDETLKRAVDDKNGVFNFFDIQELGGRNYPRF.

It to B.subtilis XkdV.

This is an uncharacterized protein from Bacillus subtilis (strain 168).